The following is a 156-amino-acid chain: Transcription elongation factor GreA (156 aa).

A coiled-coil region spans residues Met1–Glu84.

Belongs to the GreA/GreB family.

Its function is as follows. Necessary for efficient RNA polymerase transcription elongation past template-encoded arresting sites. The arresting sites in DNA have the property of trapping a certain fraction of elongating RNA polymerases that pass through, resulting in locked ternary complexes. Cleavage of the nascent transcript by cleavage factors such as GreA or GreB allows the resumption of elongation from the new 3'terminus. GreA releases sequences of 2 to 3 nucleotides. This Ureaplasma urealyticum serovar 10 (strain ATCC 33699 / Western) protein is Transcription elongation factor GreA.